Here is a 90-residue protein sequence, read N- to C-terminus: Cyclin-dependent kinases regulatory subunit 1 (90 aa).

This sequence belongs to the CKS family.

In terms of biological role, binds to the catalytic subunit of the cyclin dependent kinases and is essential for their biological function. The polypeptide is Cyclin-dependent kinases regulatory subunit 1 (CKS1) (Oryza sativa subsp. indica (Rice)).